The chain runs to 156 residues: Ribosomal RNA large subunit methyltransferase H (156 aa).

Residues leucine 73, glycine 104, and 123–128 (LSSLTL) contribute to the S-adenosyl-L-methionine site.

It belongs to the RNA methyltransferase RlmH family. As to quaternary structure, homodimer.

It localises to the cytoplasm. The enzyme catalyses pseudouridine(1915) in 23S rRNA + S-adenosyl-L-methionine = N(3)-methylpseudouridine(1915) in 23S rRNA + S-adenosyl-L-homocysteine + H(+). Functionally, specifically methylates the pseudouridine at position 1915 (m3Psi1915) in 23S rRNA. This Neisseria meningitidis serogroup A / serotype 4A (strain DSM 15465 / Z2491) protein is Ribosomal RNA large subunit methyltransferase H.